The chain runs to 1233 residues: Structural maintenance of chromosomes protein 1A (1233 aa).

Residue 32–39 (GPNGSGKS) coordinates ATP. Coiled coils occupy residues 104–124 (EYKI…LEKL) and 163–503 (ELAQ…KAEI). The segment covering 284-293 (IKEKDSELNQ) has biased composition (basic and acidic residues). Disordered stretches follow at residues 284-308 (IKEK…TSHK) and 348-369 (QEFE…TLEE). Residues Ser358 and Ser360 each carry the phosphoserine modification. One can recognise an SMC hinge domain in the interval 515-629 (VYGRLIDLCQ…DNVEDARRIA (115 aa)). N6-acetyllysine is present on residues Lys648 and Lys713. A coiled-coil region spans residues 660-935 (KAKARRWDEK…RHNLLQACKM (276 aa)). Residues 947–966 (MDDISQEEGSSQGEDSVSGS) form a disordered region. The segment covering 953 to 966 (EEGSSQGEDSVSGS) has biased composition (low complexity). At Ser957 the chain carries Phosphoserine; by ATM. A Phosphoserine modification is found at Ser962. A Phosphoserine; by ATM and ATR modification is found at Ser966. Residue Ser970 is modified to Phosphoserine. The stretch at 991 to 1068 (KDAQAEEEIK…FEQIKKERFD (78 aa)) forms a coiled coil. Position 1037 is an N6-acetyllysine (Lys1037).

Belongs to the SMC family. SMC1 subfamily. Forms a heterodimer with SMC3 in cohesin complexes. Cohesin complexes are composed of the SMC1 (SMC1A or SMC1B) and SMC3 heterodimer attached via their SMC hinge domain, RAD21 which link them, and one STAG protein (STAG1, STAG2 or STAG3), which interacts with RAD21. In germ cell cohesin complexes, SMC1A is mutually exclusive with SMC1B. Interacts with BRCA1. Found in a complex with CDCA5, SMC3 and RAD21, PDS5A/SCC-112 and PDS5B/APRIN. Interacts with NDC80. Interacts with BRAT1. Found in a complex containing POLE and SMC3. Interacts with RPGR, STAG3 and SYCP2. The cohesin complex interacts with the cohesin loading complex subunits NIPBL/Scc2 (via HEAT repeats) and MAU2/Scc4. NIPBL directly contacts all members of the complex, RAD21, SMC1A/B, SMC3 and STAG1. Ubiquitinated by the DCX(DCAF15) complex, leading to its degradation. Post-translationally, phosphorylated by ATM upon ionizing radiation in a NBS1-dependent manner. Phosphorylated by ATR upon DNA methylation in a MSH2/MSH6-dependent manner. Phosphorylation of Ser-957 and Ser-966 activates it and is required for S-phase checkpoint activation.

The protein localises to the nucleus. It is found in the chromosome. Its subcellular location is the centromere. It localises to the kinetochore. In terms of biological role, involved in chromosome cohesion during cell cycle and in DNA repair. Central component of cohesin complex. The cohesin complex is required for the cohesion of sister chromatids after DNA replication. The cohesin complex apparently forms a large proteinaceous ring within which sister chromatids can be trapped. At anaphase, the complex is cleaved and dissociates from chromatin, allowing sister chromatids to segregate. The cohesin complex may also play a role in spindle pole assembly during mitosis. Involved in DNA repair via its interaction with BRCA1 and its related phosphorylation by ATM, or via its phosphorylation by ATR. Works as a downstream effector both in the ATM/NBS1 branch and in the ATR/MSH2 branch of S-phase checkpoint. In Homo sapiens (Human), this protein is Structural maintenance of chromosomes protein 1A (SMC1A).